Consider the following 300-residue polypeptide: Ribosomal protein L11 methyltransferase (300 aa).

S-adenosyl-L-methionine contacts are provided by Thr152, Gly173, Asp195, and Asn234.

It belongs to the methyltransferase superfamily. PrmA family.

Its subcellular location is the cytoplasm. The enzyme catalyses L-lysyl-[protein] + 3 S-adenosyl-L-methionine = N(6),N(6),N(6)-trimethyl-L-lysyl-[protein] + 3 S-adenosyl-L-homocysteine + 3 H(+). Functionally, methylates ribosomal protein L11. The protein is Ribosomal protein L11 methyltransferase of Burkholderia thailandensis (strain ATCC 700388 / DSM 13276 / CCUG 48851 / CIP 106301 / E264).